Reading from the N-terminus, the 218-residue chain is Elongation factor Ts (218 aa).

An involved in Mg(2+) ion dislocation from EF-Tu region spans residues Thr-82 to Val-85.

Belongs to the EF-Ts family.

The protein localises to the cytoplasm. Functionally, associates with the EF-Tu.GDP complex and induces the exchange of GDP to GTP. It remains bound to the aminoacyl-tRNA.EF-Tu.GTP complex up to the GTP hydrolysis stage on the ribosome. This Prochlorococcus marinus (strain NATL1A) protein is Elongation factor Ts.